A 73-amino-acid polypeptide reads, in one-letter code: Beta-defensin 10 (73 aa).

Positions 1-23 are cleaved as a signal peptide; sequence MRTLCSLLLICCLLFSYTTPAVG. Intrachain disulfides connect C37/C66, C44/C59, and C49/C67.

This sequence belongs to the beta-defensin family. As to expression, expressed in both adult and neonate brain, and very weakly in kidneys, epididymis, and testis.

Its subcellular location is the secreted. Has antibacterial activity. In Mus musculus (Mouse), this protein is Beta-defensin 10 (Defb10).